The primary structure comprises 174 residues: uncharacterized protein (174 aa).

Positions 153 to 174 (RSGNHSAGNVHPASPMIKVQGG) are disordered.

This is an uncharacterized protein from Sinorhizobium fredii (strain NBRC 101917 / NGR234).